Consider the following 463-residue polypeptide: Glycine--tRNA ligase (463 aa).

Substrate is bound by residues Arg98 and Glu174. ATP is bound by residues 206–208 (RNE), 216–221 (FRTREF), 290–291 (EL), and 334–337 (GADR). 221–225 (FEQME) is a substrate binding site. A substrate-binding site is contributed by 330–334 (EPSLG).

This sequence belongs to the class-II aminoacyl-tRNA synthetase family. Homodimer.

It localises to the cytoplasm. It catalyses the reaction tRNA(Gly) + glycine + ATP = glycyl-tRNA(Gly) + AMP + diphosphate. Functionally, catalyzes the attachment of glycine to tRNA(Gly). The polypeptide is Glycine--tRNA ligase (Staphylococcus aureus (strain bovine RF122 / ET3-1)).